Consider the following 460-residue polypeptide: Elongation factor 1-alpha-B (460 aa).

Gly2 bears the N,N,N-trimethylglycine mark. At Lys3 the chain carries N6,N6-dimethyllysine; alternate. The residue at position 3 (Lys3) is an N6-methyllysine; alternate. The region spanning 5–240 (KGHINVVVIG…DSIEPPARPT (236 aa)) is the tr-type G domain. The G1 stretch occupies residues 14–21 (GHVDSGKS). A GTP-binding site is contributed by 14 to 21 (GHVDSGKS). The residue at position 30 (Lys30) is an N6-methyllysine. A G2 region spans residues 70-74 (GITID). Lys79 carries the post-translational modification N6,N6,N6-trimethyllysine. The tract at residues 91–94 (DAPG) is G3. Residues 91 to 95 (DAPGH) and 153 to 156 (NKMD) each bind GTP. The segment at 153-156 (NKMD) is G4. The segment at 192–194 (SGF) is G5. Lys316 bears the N6,N6-dimethyllysine; alternate mark. Lys316 carries the post-translational modification N6-methyllysine; alternate. At Lys390 the chain carries N6-methyllysine.

This sequence belongs to the TRAFAC class translation factor GTPase superfamily. Classic translation factor GTPase family. EF-Tu/EF-1A subfamily.

It is found in the cytoplasm. This protein promotes the GTP-dependent binding of aminoacyl-tRNA to the A-site of ribosomes during protein biosynthesis. The chain is Elongation factor 1-alpha-B (tef102) from Schizosaccharomyces pombe (strain 972 / ATCC 24843) (Fission yeast).